Reading from the N-terminus, the 625-residue chain is Serine/threonine-protein kinase PknB (625 aa).

Residues 1–331 (MTTPQHLSDR…KQRSTSVARW (331 aa)) are Cytoplasmic-facing. The Protein kinase domain maps to 11–274 (YELGEILGFG…TAAEMRADLI (264 aa)). Residues 17–25 (LGFGGMSEV), Lys-40, and 93–95 (EYV) contribute to the ATP site. The active-site Proton acceptor is Asp-138. ATP contacts are provided by residues 140–143 (KPAN) and Asp-156. The Mg(2+) site is built by Asn-143 and Asp-156. Ser-169 is modified (phosphoserine; by autocatalysis). Phosphothreonine; by autocatalysis occurs at positions 171, 173, and 294. Ser-295 bears the Phosphoserine; by autocatalysis mark. The interval 302-321 (ADRAGAATQDMPVPRPAGYS) is disordered. A Phosphothreonine; by autocatalysis modification is found at Thr-309. A helical membrane pass occupies residues 332 to 352 (LIAVAVLAVLTVVVTVAINMV). The Extracellular portion of the chain corresponds to 353–625 (GGNPRNVQVP…DAKITLSFAA (273 aa)). 4 consecutive PASTA domains span residues 355 to 421 (NPRN…NVST), 422 to 489 (GPEQ…VVGA), 490 to 556 (GPED…RVSK), and 557 to 625 (GNQF…SFAA). The disordered stretch occupies residues 591 to 612 (DVRDSGQRTNAVVTQSPSAGTP). Residues 597–611 (QRTNAVVTQSPSAGT) show a composition bias toward polar residues.

Belongs to the protein kinase superfamily. Ser/Thr protein kinase family. In terms of assembly, homodimer. Autophosphorylated. Dephosphorylated by PstP.

The protein resides in the cell membrane. It catalyses the reaction L-seryl-[protein] + ATP = O-phospho-L-seryl-[protein] + ADP + H(+). The catalysed reaction is L-threonyl-[protein] + ATP = O-phospho-L-threonyl-[protein] + ADP + H(+). By K-252a. Protein kinase that regulates many aspects of mycobacterial physiology. Is a key component of a signal transduction pathway that regulates cell growth, cell shape and cell division via phosphorylation of target proteins. Probably phosphorylates RseA. In Mycolicibacterium smegmatis (strain ATCC 700084 / mc(2)155) (Mycobacterium smegmatis), this protein is Serine/threonine-protein kinase PknB (pknB).